Here is a 132-residue protein sequence, read N- to C-terminus: MNFKYIIAVSFLIASAYARSEEYDIQSLSQRDVLEEESLRKIRGIGSAILSAGKSIIKGLAKGLAEHFGKRTAEDHEVMKRLEAAMRDLDSLDYPEEASERETRGFNQEEKEKRIIGPVLGLVGKALGGLLG.

The first 18 residues, 1–18, serve as a signal peptide directing secretion; it reads MNFKYIIAVSFLIASAYA. The propeptide occupies 19–42; that stretch reads RSEEYDIQSLSQRDVLEEESLRKI. Phe68 is subject to Phenylalanine amide. Residues 72–112 constitute a propeptide that is removed on maturation; sequence TAEDHEVMKRLEAAMRDLDSLDYPEEASERETRGFNQEEKE. The residue at position 131 (Leu131) is a Leucine amide.

It belongs to the bombinin family. Expressed by the skin glands.

The protein resides in the secreted. In terms of biological role, has antimicrobial activity against Gram-negative bacterium E.coli (MIC=26.3 uM), Gram-positive bacterium S.aureus (MIC=26.3 uM) and yeast C.albicans (MIC=52.5 uM). Has moderate hemolytic activity towards human erythrocytes at a concentration of 52.2 uM. Has no antimicrobial activity at concentrations up to 161 uM. Has moderate hemolytic activity towards human erythrocytes at a concentration of 40.3 uM. In Bombina orientalis (Oriental fire-bellied toad), this protein is Bombinin-like peptides.